We begin with the raw amino-acid sequence, 131 residues long: Protein Turandot M (131 aa).

Residues 1–23 (MNPTVYLSCLVVFSLFYLGKAQA) form the signal peptide.

It belongs to the Turandot family.

It is found in the secreted. A humoral factor that may play a role in stress tolerance. Requires Mekk1 expression in the fat body to regulate response to septic injury and consequent immune response. In Drosophila yakuba (Fruit fly), this protein is Protein Turandot M.